The sequence spans 161 residues: 2-C-methyl-D-erythritol 2,4-cyclodiphosphate synthase (161 aa).

Positions 8 and 10 each coordinate a divalent metal cation. 4-CDP-2-C-methyl-D-erythritol 2-phosphate-binding positions include D8–H10 and H34–S35. H42 contacts a divalent metal cation. 4-CDP-2-C-methyl-D-erythritol 2-phosphate is bound by residues D56 to G58 and R142.

It belongs to the IspF family. In terms of assembly, homotrimer. Requires a divalent metal cation as cofactor.

It carries out the reaction 4-CDP-2-C-methyl-D-erythritol 2-phosphate = 2-C-methyl-D-erythritol 2,4-cyclic diphosphate + CMP. Its pathway is isoprenoid biosynthesis; isopentenyl diphosphate biosynthesis via DXP pathway; isopentenyl diphosphate from 1-deoxy-D-xylulose 5-phosphate: step 4/6. Functionally, involved in the biosynthesis of isopentenyl diphosphate (IPP) and dimethylallyl diphosphate (DMAPP), two major building blocks of isoprenoid compounds. Catalyzes the conversion of 4-diphosphocytidyl-2-C-methyl-D-erythritol 2-phosphate (CDP-ME2P) to 2-C-methyl-D-erythritol 2,4-cyclodiphosphate (ME-CPP) with a corresponding release of cytidine 5-monophosphate (CMP). This chain is 2-C-methyl-D-erythritol 2,4-cyclodiphosphate synthase, found in Treponema denticola (strain ATCC 35405 / DSM 14222 / CIP 103919 / JCM 8153 / KCTC 15104).